We begin with the raw amino-acid sequence, 189 residues long: Nuclear distribution protein nudE homolog 1 (189 aa).

Positions 4–121 form a coiled coil; sequence NLDLETAIQI…LRVSKEEATS (118 aa). The span at 114 to 126 shows a compositional bias: basic and acidic residues; sequence VSKEEATSGETRR. The segment at 114 to 139 is disordered; it reads VSKEEATSGETRRNTRSLPSQNKKMK.

The protein belongs to the nudE family. In terms of assembly, self-associates. Interacts with PAC1.

The protein resides in the nucleus. Its subcellular location is the cytoplasm. The protein localises to the cytoskeleton. Required for nuclear migration to the bud neck during cell division. Targets cytoplasmic dynein to microtubule plus ends thereby promoting dynein-mediated microtubule sliding along the bud cortex and consequently the movement of the mitotic spindle to the bud neck. The chain is Nuclear distribution protein nudE homolog 1 (NDL1) from Saccharomyces cerevisiae (strain ATCC 204508 / S288c) (Baker's yeast).